The following is a 1057-amino-acid chain: MSSQQFPRSGAPPPGLGANPPTGPASGTAGLIAPAATTSDESVRDPEVAPRDQHLGPGGPAPPREEKQEPVVVRPYPQVQMLAPHHPVPPGAPVTVAAPPAHLAPAVPLSFSDGLMKPPLKPTMPSRPIAPAPPSTLSAPTKVPGQVTVTMESSIPQAPTIPVATISGQQGHPSNLHHIMATNVQMSIIRSSAPGPPLHIGASHLPRGAAAAAVMSSSKVTTVLRPASQLPNAATAQPAVQHIIHQPIQSRPPVTTSSTIPPAVVATVSATRAQSPVITTTAAHATESTLSRPTLSIQQHPPSAAISIQRPAQPRDAATRITLPSHPAIGAQKQQLHTMAQKTIFSTGTPVAAATVAPILATNTIASATTAGSVSHTQAPTSTIVTMTMPSHSSHATAVTTSNIPVAKVVPQQITHTSPRIQSDYTAERSNLIPLSSHRASPNPVAMETRNDNRQSVPVQFQYFLPTYPPSAYPLTAHTYTPITSSVSTIRQYPVSAQAPNSAITAQTGVGVASTVHLNPMQLMTVDASHARHIQGIQPAPISAQGIQPAPIGAQGIQPAPIGTQGLHPAAPIGTQGLQPAPISAQQPQADTKTSVVLADGATIVANPISNTFNTASAATTVVQTHSQSASAPAQGSSPRPSILRKKPTTDGLAVRKSLIPPQPPEVASTRVENTMRSTSGSPRPAGAKPKPEIHVSMATPVTVSMEAVSNQGSEQPTIAVPPSSQQPPSAIPTIIAAASPTSQPAAALSTIPGAVPAAPPTSTTIVAAPAPPATMSGALSAVLGPVVPEIKIKEEAEPMDIMRPVSAVPPLTTSTVSPSLALLANNLSMPPSDLPPGASPRKKPRKQQHVISTEEGDMMETNSTDDEKSTAKSLLVKAEKRKSPPKEYIDEEGVRYVPVRPRPPITLLRHYRNPWKAAYHHFQRYSDVRVKEEKKAMLQEIANQKGVSCRAQGWKVHLCAAQLLQLTNLEHDVYERLTALQEGLIPKKKAATDDDLHRINELIQGNMQRCKLVMDQINEARDSMLKVLDHKDRVLKLLNKNGTVKKVSKLKRKEKV.

Disordered regions lie at residues 1-68 (MSSQ…EEKQ), 289-314 (TLSR…PAQP), 556-594 (GIQP…DTKT), 624-692 (QTHS…KPKP), and 827-880 (NLSM…VKAE). Over residues 41–54 (ESVRDPEVAPRDQH) the composition is skewed to basic and acidic residues. Positions 289–301 (TLSRPTLSIQQHP) are enriched in polar residues. Composition is skewed to low complexity over residues 579–590 (QPAPISAQQPQA) and 624–642 (QTHS…PRPS). Residues 671 to 682 (RVENTMRSTSGS) show a composition bias toward polar residues.

This sequence belongs to the SAP130 family. Component of a mSin3A corepressor complex that contains SIN3A, SAP130, SUDS3/SAP45, ARID4B/SAP180, HDAC1 and HDAC2.

It is found in the nucleus. In terms of biological role, acts as a transcriptional repressor. May function in the assembly and/or enzymatic activity of the mSin3A corepressor complex or in mediating interactions between the complex and other regulatory complexes. This is Histone deacetylase complex subunit SAP130 (SAP130) from Gallus gallus (Chicken).